Consider the following 119-residue polypeptide: Large ribosomal subunit protein bL20 (119 aa).

It belongs to the bacterial ribosomal protein bL20 family.

Functionally, binds directly to 23S ribosomal RNA and is necessary for the in vitro assembly process of the 50S ribosomal subunit. It is not involved in the protein synthesizing functions of that subunit. The chain is Large ribosomal subunit protein bL20 from Listeria innocua serovar 6a (strain ATCC BAA-680 / CLIP 11262).